The chain runs to 102 residues: Large ribosomal subunit protein bL21 (102 aa).

Belongs to the bacterial ribosomal protein bL21 family. In terms of assembly, part of the 50S ribosomal subunit. Contacts protein L20.

In terms of biological role, this protein binds to 23S rRNA in the presence of protein L20. The sequence is that of Large ribosomal subunit protein bL21 from Cytophaga hutchinsonii (strain ATCC 33406 / DSM 1761 / CIP 103989 / NBRC 15051 / NCIMB 9469 / D465).